A 357-amino-acid polypeptide reads, in one-letter code: Inner membrane protein YcfT (357 aa).

Topologically, residues 1 to 12 (MKQKELWINQIK) are cytoplasmic. Residues 13–33 (GLCICLVVIYHSVITFYPHLT) traverse the membrane as a helical segment. The Periplasmic portion of the chain corresponds to 34 to 49 (TFQHPLSEVLSKCWIY). A helical membrane pass occupies residues 50–70 (FNLYLAPFRMPVFFFISGYLI). Over 71–86 (RRYIDSVPWGNCLDKR) the chain is Cytoplasmic. Residues 87 to 107 (IWNIFWVLALWGVVQWLALSA) traverse the membrane as a helical segment. Residues 108–135 (LNQWLAPERDLSNASNAAYADSTGEFLH) are Periplasmic-facing. The chain crosses the membrane as a helical span at residues 136-156 (GMITASTSLWYLYALIVYFVV). Residues 157-162 (CKIFSR) are Cytoplasmic-facing. Residues 163-183 (LALPLFALFVLLSVAVNFVPT) traverse the membrane as a helical segment. The Periplasmic segment spans residues 184 to 196 (PWWGMNSVIRNLP). A helical membrane pass occupies residues 197-217 (YYSLGAWFGATIMTCVKEVPL). Residues 218-231 (RRHLLMASLLTVLA) are Cytoplasmic-facing. Residues 232 to 252 (VGAWLFTISLLLSLVSIVVIM) form a helical membrane-spanning segment. Over 253–310 (KLFYQYEQRFGMRSTSLLNVIGSNTIAIYTTHRILVEIFSLTLLAQMNAARWSPQVEL) the chain is Periplasmic. Residues 311-331 (TLLLVYPFVSLFICTVAGLLV) traverse the membrane as a helical segment. Residues 332–357 (RKLSQRAFSDLLFSPPSLPAAVSYSR) lie on the Cytoplasmic side of the membrane.

This sequence belongs to the acyltransferase 3 family.

It localises to the cell inner membrane. This is Inner membrane protein YcfT (ycfT) from Escherichia coli (strain K12).